The chain runs to 1038 residues: Kinesin-like protein KIN-5B (1038 aa).

Positions 1 to 63 (MAQTPNPSRR…GGGGGGGSEM (63 aa)) are disordered. The span at 24-34 (RPERRQLELRW) shows a compositional bias: basic and acidic residues. Over residues 49–61 (GLTGGGGGGGGGS) the composition is skewed to gly residues. A Kinesin motor domain is found at 69 to 410 (NVQVVLRCRP…LDYAYRAKSI (342 aa)). Position 154–161 (154–161 (GQTGTGKT)) interacts with ATP. A coiled-coil region spans residues 453 to 502 (QERFALEEAEKKTMRDKIEYLETQNKELKMNIESCKKEYLDLEEAHSRAN). Positions 1013-1038 (DKGKRYVDQGTRTPRSPLMPVNHYNK) are disordered.

The protein belongs to the TRAFAC class myosin-kinesin ATPase superfamily. Kinesin family. KIN-5/BimC subfamily.

It localises to the cytoplasm. It is found in the cytoskeleton. The protein resides in the spindle. In terms of biological role, responsible for microtubule translocation. May be important for the organization of phragmoplast-specific arrays of microtubules. Plays an essential role in stabilizing the mitotic spindle. Required during mitotic cytokinesis. This is Kinesin-like protein KIN-5B from Oryza sativa subsp. japonica (Rice).